The chain runs to 417 residues: Tyrosine--tRNA ligase (417 aa).

Position 34 (Tyr-34) interacts with L-tyrosine. Positions 39-48 (PSGDSLHIGH) match the 'HIGH' region motif. Tyr-165 and Gln-169 together coordinate L-tyrosine. The short motif at 227–231 (KFGKT) is the 'KMSKS' region element. Position 230 (Lys-230) interacts with ATP. Residues 349–415 (ANIVDWLVDT…GKKNYTLAKV (67 aa)) form the S4 RNA-binding domain.

The protein belongs to the class-I aminoacyl-tRNA synthetase family. TyrS type 1 subfamily. In terms of assembly, homodimer.

Its subcellular location is the cytoplasm. The enzyme catalyses tRNA(Tyr) + L-tyrosine + ATP = L-tyrosyl-tRNA(Tyr) + AMP + diphosphate + H(+). In terms of biological role, catalyzes the attachment of tyrosine to tRNA(Tyr) in a two-step reaction: tyrosine is first activated by ATP to form Tyr-AMP and then transferred to the acceptor end of tRNA(Tyr). This Limosilactobacillus fermentum (strain NBRC 3956 / LMG 18251) (Lactobacillus fermentum) protein is Tyrosine--tRNA ligase.